Here is a 929-residue protein sequence, read N- to C-terminus: Synaptopodin (929 aa).

N-acetylmethionine is present on Met1. Residues 1 to 12 are compositionally biased toward pro residues; sequence MLGPHLPPPPLA. The tract at residues 1–260 is disordered; the sequence is MLGPHLPPPP…EASLLRHLEK (260 aa). Basic and acidic residues-rich tracts occupy residues 60–69 and 91–110; these read GVSRSGDDSA and SREE…DWDV. A Phosphoserine modification is found at Ser140. A compositionally biased stretch (basic and acidic residues) spans 142–151; it reads TEKDLKEAKA. A compositionally biased stretch (polar residues) spans 152–170; that stretch reads RSQQIAAQLTTPPSSNSRG. Residue Ser207 is modified to Phosphoserine. A compositionally biased stretch (pro residues) spans 224 to 234; the sequence is EPGPPRHPSPQ. Residue Ser263 is modified to Phosphoserine. The tract at residues 285–389 is disordered; it reads GLHLSQNREA…TLCADGQPQA (105 aa). The segment covering 317–332 has biased composition (low complexity); it reads LASPSATLTTPTSNSS. N-linked (GlcNAc...) asparagine glycosylation occurs at Asn330. Positions 333–379 are enriched in polar residues; sequence HNPPATDVNQNPPATVVPQSLPLSSIQQNSSEAQLPSNGTGPASKPS. Residues Ser501 and Ser525 each carry the phosphoserine modification. The disordered stretch occupies residues 509–558; sequence FGEKAPAPQPPSLPDRSPRPQRHIMSRSPMVERRMMGQRSPASERRPLGN. Thr560 bears the Phosphothreonine mark. Residues 562 to 565 carry the PPxY motif motif; it reads PPTY. Ser580 is modified (phosphoserine). The PPxY motif motif lies at 581 to 584; the sequence is PPSY. Disordered regions lie at residues 589 to 610 and 630 to 726; these read PSSD…KTGI and KPKV…KGAE. Residues 646–656 show a composition bias toward basic and acidic residues; it reads ADEKRRQRDQG. Phosphoserine is present on residues Ser685, Ser702, and Tyr738. The span at 685-698 shows a compositional bias: low complexity; it reads SPAAAEEVVPEWAS. The disordered stretch occupies residues 740–763; sequence IESSSHTPELARCPSPTMSLPSSW. Thr746 bears the Phosphothreonine mark. A phosphoserine mark is found at Ser754, Ser758, and Ser779. At Thr783 the chain carries Phosphothreonine. Residues Pro784, Thr804, Arg812, Lys826, Ser833, Ser854, Pro871, and Pro894 each carry the phosphoserine modification. Over residues 826–839 the composition is skewed to low complexity; the sequence is KVSPRAASPAKPSS. A disordered region spans residues 826–916; sequence KVSPRAASPA…RPSFSTRNAG (91 aa). The span at 866 to 880 shows a compositional bias: polar residues; sequence GLYTSPGQDSLQPTA.

It belongs to the synaptopodin family. In terms of assembly, interacts with BAIAP1. Interacts with actin. Interacts (via PPxY motifs) with WWC1 (via WW domains). Post-translationally, O-glycosylated. In terms of tissue distribution, expressed in cerebral cortex.

Its subcellular location is the cytoplasm. It is found in the cytoskeleton. It localises to the cell junction. The protein resides in the tight junction. The protein localises to the perikaryon. Its subcellular location is the cell projection. It is found in the dendritic spine. It localises to the postsynaptic density. The protein resides in the synapse. The protein localises to the cytosol. Actin-associated protein that may play a role in modulating actin-based shape and motility of dendritic spines and renal podocyte foot processes. Seems to be essential for the formation of spine apparatuses in spines of telencephalic neurons, which is involved in synaptic plasticity. The chain is Synaptopodin (SYNPO) from Homo sapiens (Human).